Consider the following 29-residue polypeptide: Cytochrome b6-f complex subunit 8 (29 aa).

Residues 3-23 (ILTLGWVSILALFTWSIAMVV) form a helical membrane-spanning segment.

Belongs to the PetN family. As to quaternary structure, the 4 large subunits of the cytochrome b6-f complex are cytochrome b6, subunit IV (17 kDa polypeptide, PetD), cytochrome f and the Rieske protein, while the 4 small subunits are PetG, PetL, PetM and PetN. The complex functions as a dimer.

It is found in the cellular thylakoid membrane. Functionally, component of the cytochrome b6-f complex, which mediates electron transfer between photosystem II (PSII) and photosystem I (PSI), cyclic electron flow around PSI, and state transitions. In Microcystis aeruginosa (strain NIES-843 / IAM M-2473), this protein is Cytochrome b6-f complex subunit 8.